A 922-amino-acid chain; its full sequence is Isoleucine--tRNA ligase (922 aa).

The 'HIGH' region motif lies at 57-67 (PYANGDIHMGH). Glu-553 is an L-isoleucyl-5'-AMP binding site. A 'KMSKS' region motif is present at residues 594-598 (KMSKS). Lys-597 contacts ATP. Residues Cys-889, Cys-892, Cys-909, and Cys-912 each coordinate Zn(2+).

This sequence belongs to the class-I aminoacyl-tRNA synthetase family. IleS type 1 subfamily. Monomer. The cofactor is Zn(2+).

The protein localises to the cytoplasm. The catalysed reaction is tRNA(Ile) + L-isoleucine + ATP = L-isoleucyl-tRNA(Ile) + AMP + diphosphate. In terms of biological role, catalyzes the attachment of isoleucine to tRNA(Ile). As IleRS can inadvertently accommodate and process structurally similar amino acids such as valine, to avoid such errors it has two additional distinct tRNA(Ile)-dependent editing activities. One activity is designated as 'pretransfer' editing and involves the hydrolysis of activated Val-AMP. The other activity is designated 'posttransfer' editing and involves deacylation of mischarged Val-tRNA(Ile). In Bacillus licheniformis (strain ATCC 14580 / DSM 13 / JCM 2505 / CCUG 7422 / NBRC 12200 / NCIMB 9375 / NCTC 10341 / NRRL NRS-1264 / Gibson 46), this protein is Isoleucine--tRNA ligase.